The chain runs to 72 residues: MKSGIHPTYVTTTVTCTCGSTFTTRSTAASGQIHADVCSACHPFYTGKQKILDTGGRVARFEARYGKRTPAN.

The Zn(2+) site is built by C16, C18, C38, and C41.

The protein belongs to the bacterial ribosomal protein bL31 family. Type A subfamily. Part of the 50S ribosomal subunit. Zn(2+) serves as cofactor.

Binds the 23S rRNA. The sequence is that of Large ribosomal subunit protein bL31 from Beutenbergia cavernae (strain ATCC BAA-8 / DSM 12333 / CCUG 43141 / JCM 11478 / NBRC 16432 / NCIMB 13614 / HKI 0122).